A 468-amino-acid chain; its full sequence is uncharacterized protein (468 aa).

Coiled-coil stretches lie at residues 10-94 (NEAL…VKEL) and 147-279 (FVEL…EASI). The segment at 324-369 (TPRTVDPIPEGTIIKKESSDDAMFSGLKKSKPKKSNKSNNNQADSD) is disordered. The residue at position 342 (Ser-342) is a Phosphoserine. A coiled-coil region spans residues 399 to 445 (VEQLKSRIAHFKEQQDSVTKQRIEKAKQEIEKLEAKYNSKEEKTLTE).

The protein resides in the cytoplasm. This is an uncharacterized protein from Schizosaccharomyces pombe (strain 972 / ATCC 24843) (Fission yeast).